Consider the following 77-residue polypeptide: Large ribosomal subunit protein uL24 (77 aa).

The protein belongs to the universal ribosomal protein uL24 family. As to quaternary structure, part of the 50S ribosomal subunit.

In terms of biological role, one of two assembly initiator proteins, it binds directly to the 5'-end of the 23S rRNA, where it nucleates assembly of the 50S subunit. Its function is as follows. One of the proteins that surrounds the polypeptide exit tunnel on the outside of the subunit. In Campylobacter jejuni subsp. jejuni serotype O:6 (strain 81116 / NCTC 11828), this protein is Large ribosomal subunit protein uL24.